Consider the following 725-residue polypeptide: Kelch domain-containing protein SSO1033 (725 aa).

Residues Met1–His28 form the signal peptide. Kelch repeat units lie at residues Ser59–Asn100, Thr101–Asn145, Ala146–Thr199, Leu201–Gly248, Leu250–Asn297, and Leu299–Gly342. 4 Fibronectin type-III domains span residues Pro323–Ser410, Val411–Ser504, Val505–Tyr583, and Pro585–Tyr665.

This chain is Kelch domain-containing protein SSO1033, found in Saccharolobus solfataricus (strain ATCC 35092 / DSM 1617 / JCM 11322 / P2) (Sulfolobus solfataricus).